The chain runs to 473 residues: Photosystem II CP43 reaction center protein (473 aa).

A propeptide spanning residues 1–14 (MKTLYSLRRFYHVE) is cleaved from the precursor. An N-acetylthreonine modification is found at threonine 15. A Phosphothreonine modification is found at threonine 15. The next 5 helical transmembrane spans lie at 69–93 (LFEVAHFVPEKPMYEQGLILLPHLA), 134–155 (LLGPETLEESFPFFGYVWKDRN), 178–200 (KALYFGGVYDTWAPGGGDVRKIT), 255–275 (KPFAWARRAFVWSGEAYLSYS), and 291–312 (WFNNTAYPSEFYGPTGPEASQA). Glutamate 367 contributes to the [CaMn4O5] cluster binding site. The chain crosses the membrane as a helical span at residues 447-471 (RARAAAAGFEKGIDRDFEPVLSMTP).

The protein belongs to the PsbB/PsbC family. PsbC subfamily. In terms of assembly, PSII is composed of 1 copy each of membrane proteins PsbA, PsbB, PsbC, PsbD, PsbE, PsbF, PsbH, PsbI, PsbJ, PsbK, PsbL, PsbM, PsbT, PsbX, PsbY, PsbZ, Psb30/Ycf12, at least 3 peripheral proteins of the oxygen-evolving complex and a large number of cofactors. It forms dimeric complexes. Requires Binds multiple chlorophylls and provides some of the ligands for the Ca-4Mn-5O cluster of the oxygen-evolving complex. It may also provide a ligand for a Cl- that is required for oxygen evolution. PSII binds additional chlorophylls, carotenoids and specific lipids. as cofactor.

The protein resides in the plastid. Its subcellular location is the chloroplast thylakoid membrane. One of the components of the core complex of photosystem II (PSII). It binds chlorophyll and helps catalyze the primary light-induced photochemical processes of PSII. PSII is a light-driven water:plastoquinone oxidoreductase, using light energy to abstract electrons from H(2)O, generating O(2) and a proton gradient subsequently used for ATP formation. This chain is Photosystem II CP43 reaction center protein, found in Ipomoea purpurea (Common morning glory).